Reading from the N-terminus, the 400-residue chain is Tryptophan synthase beta chain (400 aa).

At Lys91 the chain carries N6-(pyridoxal phosphate)lysine.

Belongs to the TrpB family. As to quaternary structure, tetramer of two alpha and two beta chains. The cofactor is pyridoxal 5'-phosphate.

The enzyme catalyses (1S,2R)-1-C-(indol-3-yl)glycerol 3-phosphate + L-serine = D-glyceraldehyde 3-phosphate + L-tryptophan + H2O. Its pathway is amino-acid biosynthesis; L-tryptophan biosynthesis; L-tryptophan from chorismate: step 5/5. Functionally, the beta subunit is responsible for the synthesis of L-tryptophan from indole and L-serine. The sequence is that of Tryptophan synthase beta chain from Listeria monocytogenes serovar 1/2a (strain ATCC BAA-679 / EGD-e).